The following is a 421-amino-acid chain: MVADVLLTHFNQLFCLNDPGHPLTGQEMKKATIVEDGYIAIKDSLIVALGSGEPDAELVGPQTIMRSYKGKIATPGIIDCHTHLVYGGSREHEFAKKLAGVSYLDILAQGGGILSTVRATRSASFDNLYQKSKRLLDYMLLHGVTTVEAKSGYGLDWETEKRQLDVVAALEKDHPIDLVSTFMAAHAIPEEYKGNPKAYLDVIIKDMLPVVKEENLAEFCDIFCEKNVFTADESRYLLSKAKEMGFKLRIHADEIASIGGVDVAAELSAVSAEHLMMITDDGIAKLIGAGVIGNLLPATTFSLMEDTYAPARKMIDAGMAITLSTDSNPGSCPTANMQFVMQLGCFMLRLTPIEVLNAVTINAAYSVNRQERVGSLTVGKEADIAIFDAPNIDYPFYFFATNLIHQVYKKGQLTVDRGRIL.

Positions 81 and 83 each coordinate Fe(3+). Zn(2+) contacts are provided by histidine 81 and histidine 83. 3 residues coordinate 4-imidazolone-5-propanoate: arginine 90, tyrosine 153, and histidine 186. N-formimidoyl-L-glutamate is bound at residue tyrosine 153. Residue histidine 251 participates in Fe(3+) binding. Residue histidine 251 participates in Zn(2+) binding. Position 254 (glutamate 254) interacts with 4-imidazolone-5-propanoate. Aspartate 326 contacts Fe(3+). A Zn(2+)-binding site is contributed by aspartate 326. Asparagine 328 and glycine 330 together coordinate N-formimidoyl-L-glutamate. Residue serine 331 coordinates 4-imidazolone-5-propanoate.

It belongs to the metallo-dependent hydrolases superfamily. HutI family. Zn(2+) is required as a cofactor. The cofactor is Fe(3+).

It localises to the cytoplasm. The enzyme catalyses 4-imidazolone-5-propanoate + H2O = N-formimidoyl-L-glutamate. It functions in the pathway amino-acid degradation; L-histidine degradation into L-glutamate; N-formimidoyl-L-glutamate from L-histidine: step 3/3. Catalyzes the hydrolytic cleavage of the carbon-nitrogen bond in imidazolone-5-propanoate to yield N-formimidoyl-L-glutamate. It is the third step in the universal histidine degradation pathway. The polypeptide is Imidazolonepropionase (Streptococcus pyogenes serotype M4 (strain MGAS10750)).